The chain runs to 736 residues: MFNEILKKVDWHGNMLSLSTGKIARNADGAVLASMGNTSVLCTVVFDKNTKKDIDFFPLGVYYREMAYAAGKIPGGFIKKEGKFSEYEVLVSRLIDRSIRPLFDSNFRNDTQVICTVMSYDPRYSPDILAIIGSSAALAISGIPIVKPIGAARVGIVNDEFILNPVIHDNTGVNELDLVVAATFDSVTMIEAQACEIDEEKMLAAIEFGYKSLKPVINAIEEIKSSIRKDIFEVTARPHLRYNDEILKHFSSDIKSALLLQTKNERNQQLQLIQQKVVDYFSSEANDDDAILNIEKALDDVKSKIFRDLVLQDKTRIGNRAIDEIRPIICEAGLFNTVHGSALFTRGDTQSLATITLGSSTDEQIVEQLNKCERQNFLLDYIFLPYSVGEISPLRAASRREIGHGWLAKKAIQLVIPSKDVFPYTIRIVSEITQSDGSSSMATVCSASLSLMEAGVPIKTHVAGIAMGLVLGEGNKFEILSDISGCEDHLGDMDFKVASTKNGITALQLDIKVQGINLSMIESTFRQAKIGINHILNVMNNTISCPKSELSTYAPMVQTLEIQKEKIRDVIGLGGKVIKELCKTFDVEIDISENGEVKVWGNVGENVKKAVQSIENIVFVPQIGDIFDGEVVKVIESGAFIKYVTGRDGFVHISEINDTHIKDINAHVKLGDKVKVKIIGIDHKNRVKLTLRTDKEHCKNKNEQYNDITTTTGSVKKKIKIAPKEAAVISNRKYFD.

Residues Asp488 and Asp494 each contribute to the Mg(2+) site. The KH domain maps to Pro555–Ile614. The region spanning Gly624 to Arg692 is the S1 motif domain.

The protein belongs to the polyribonucleotide nucleotidyltransferase family. The cofactor is Mg(2+).

The protein resides in the cytoplasm. It catalyses the reaction RNA(n+1) + phosphate = RNA(n) + a ribonucleoside 5'-diphosphate. In terms of biological role, involved in mRNA degradation. Catalyzes the phosphorolysis of single-stranded polyribonucleotides processively in the 3'- to 5'-direction. In Orientia tsutsugamushi (strain Ikeda) (Rickettsia tsutsugamushi), this protein is Polyribonucleotide nucleotidyltransferase.